A 186-amino-acid polypeptide reads, in one-letter code: Potassium-transporting ATPase KdpC subunit (186 aa).

Residues L10–G30 form a helical membrane-spanning segment.

This sequence belongs to the KdpC family. As to quaternary structure, the system is composed of three essential subunits: KdpA, KdpB and KdpC.

It localises to the cell membrane. Its function is as follows. Part of the high-affinity ATP-driven potassium transport (or Kdp) system, which catalyzes the hydrolysis of ATP coupled with the electrogenic transport of potassium into the cytoplasm. This subunit acts as a catalytic chaperone that increases the ATP-binding affinity of the ATP-hydrolyzing subunit KdpB by the formation of a transient KdpB/KdpC/ATP ternary complex. The chain is Potassium-transporting ATPase KdpC subunit from Staphylococcus aureus (strain MSSA476).